The sequence spans 158 residues: Transcription elongation factor GreA (158 aa).

A coiled-coil region spans residues 14 to 76 (LDQLKDELTH…EIESILKNVK (63 aa)).

It belongs to the GreA/GreB family.

In terms of biological role, necessary for efficient RNA polymerase transcription elongation past template-encoded arresting sites. The arresting sites in DNA have the property of trapping a certain fraction of elongating RNA polymerases that pass through, resulting in locked ternary complexes. Cleavage of the nascent transcript by cleavage factors such as GreA or GreB allows the resumption of elongation from the new 3'terminus. GreA releases sequences of 2 to 3 nucleotides. In Acholeplasma laidlawii (strain PG-8A), this protein is Transcription elongation factor GreA.